We begin with the raw amino-acid sequence, 135 residues long: MLSPKRTRFRKQHRGRMKGISYRGNRISFGRYALRALEPAWITSRQIEAGRRAMTRYARRGGKIWVRIFPDKPVTVRPTETRMGSGKGSPEYWVSVVKPGRILYEMGGISEIVAREAISIAASKMPIRTQFVIAG.

Belongs to the universal ribosomal protein uL16 family. In terms of assembly, part of the 50S ribosomal subunit.

Its subcellular location is the plastid. It localises to the chloroplast. In Platanus occidentalis (Sycamore), this protein is Large ribosomal subunit protein uL16c.